The sequence spans 84 residues: Cell division topological specificity factor (84 aa).

It belongs to the MinE family.

Functionally, prevents the cell division inhibition by proteins MinC and MinD at internal division sites while permitting inhibition at polar sites. This ensures cell division at the proper site by restricting the formation of a division septum at the midpoint of the long axis of the cell. The protein is Cell division topological specificity factor of Paraburkholderia xenovorans (strain LB400).